The primary structure comprises 228 residues: Response regulator MprA (228 aa).

One can recognise a Response regulatory domain in the interval 2 to 116 (RILVVDDDRA…ELLARMRALL (115 aa)). 4-aspartylphosphate is present on aspartate 46. A DNA-binding region (ompR/PhoB-type) is located at residues 127–225 (SVAMTFSDLT…VRGVGYVLRE (99 aa)).

Phosphorylated and dephosphorylated by MprB.

Its subcellular location is the cytoplasm. Its function is as follows. Member of the two-component regulatory system MprB/MprA which contributes to maintaining a balance among several systems involved in stress resistance and is required for establishment and maintenance of persistent infection in the host. Functions as a transcriptional regulator that recognizes a 19-bp nucleotide motif comprizing two loosely conserved 8-bp direct DNA-binding motif repeats separated by a 3-bp spacer region. The polypeptide is Response regulator MprA (mprA) (Mycobacterium avium (strain 104)).